The chain runs to 66 residues: UPF0370 protein YpfN (66 aa).

The chain crosses the membrane as a helical span at residues 4–24; it reads LAKYWWILVLVFLVGVLLNVI. The disordered stretch occupies residues 39-66; it reads KPELPPHRDFNDKWDDEEDWPKKDQPKK. Residues 42–51 show a composition bias toward basic and acidic residues; that stretch reads LPPHRDFNDK.

It belongs to the UPF0370 family.

It localises to the cell membrane. The sequence is that of UPF0370 protein YpfN from Salmonella paratyphi A (strain AKU_12601).